Consider the following 955-residue polypeptide: Leucine-rich repeat-containing G-protein coupled receptor 4 (955 aa).

Residues 1–21 form the signal peptide; sequence MGCPGWPLALFALLLASCSGG. Topologically, residues 22–547 are extracellular; that stretch reads PSGVSSPAPC…LLGSWMIRLT (526 aa). The LRRNT domain maps to 26-59; it reads SSPAPCPAPCACDLDGGADCSGKGLVTVPDGLSV. 2 disulfide bridges follow: Cys31-Cys37 and Cys35-Cys45. LRR repeat units lie at residues 57–81, 83–105, 106–129, 131–153, 155–177, 178–201, 203–225, 226–249, 250–272, and 274–296; these read LSVFTHSLDLSMNNITKLPEGAFKG, PYLEELRLAGNDLSIIHPMALSG, LKELKVLTLQNNQLKTVPSESLKG, VSLQSLRLDANHIVTVPEDSFEG, VQLRHLWLDDNSLTEVPIRPLSN, LPSLQALTLALNKISHIPDYAFSN, SSLVVLHLHNNKIRTLGPHCFHG, LDNLEALDLNYNNLIDFPDSIRSL, PNLKELGFHSNSITIIPDGAFVK, and PLLRTIHLYDNPLSFVGNSAFQN. Asn201 is a glycosylation site (N-linked (GlcNAc...) asparagine). Asn296 and Asn316 each carry an N-linked (GlcNAc...) asparagine glycan. 5 LRR repeats span residues 320–343, 345–365, 366–389, 390–413, and 415–437; these read TNNLESLTLTGTKIRSIPIKFCQE, KMLRTLDLSYNEISALVGFEG, CSSLEEVYLQNNQIQEVQNETFQG, LAALRMLDLSRNRIHTIHKEAFVT, and KALTNLDLSFNDLTAFPTAGLHG. A disulfide bridge links Cys341 with Cys366. A glycan (N-linked (GlcNAc...) asparagine) is linked at Asn384. Intrachain disulfides connect Cys472-Cys525 and Cys473-Cys478. A helical transmembrane segment spans residues 548-568; it reads VWFIFLLALIFNVIVIVTMFA. Topologically, residues 569–578 are cytoplasmic; sequence SCSQLTSSKL. The helical transmembrane segment at 579–599 threads the bilayer; it reads FIGLIAVSNLFMGVYTGTLTV. Residues 600–623 lie on the Extracellular side of the membrane; it reads LDTISWGQFAEFGIWWETGNGCKV. Cysteines 621 and 696 form a disulfide. Residues 624 to 644 traverse the membrane as a helical segment; the sequence is AGFLAIFSSESAIFFLMLAAI. Residues 645–666 lie on the Cytoplasmic side of the membrane; it reads ERSLSAKDIIKKEKHQHLRKFQ. A helical membrane pass occupies residues 667–687; the sequence is VASLLAVLLAAAAGCLPLFHI. The Extracellular portion of the chain corresponds to 688–706; that stretch reads GEFSSSPLCLPFPTGETPS. A helical transmembrane segment spans residues 707–727; that stretch reads LGFTVTLVLLNSLAFLIMVIT. Topologically, residues 728–759 are cytoplasmic; the sequence is YTKLYCTIEKEDLSENAESSMIKHVAWLIFTN. The chain crosses the membrane as a helical span at residues 760–780; sequence CIFFCPVAFFSFAPLITAIYI. The Extracellular portion of the chain corresponds to 781 to 786; sequence SPEIMK. A helical membrane pass occupies residues 787-807; sequence SVTLIFLPLPACLNPVLYVFF. Topologically, residues 808–955 are cytoplasmic; it reads NPKFKEDWKL…YAYNIPRMKD (148 aa).

It belongs to the G-protein coupled receptor 1 family.

It localises to the cell membrane. Its function is as follows. Receptor for R-spondins that potentiates the canonical Wnt signaling pathway and is involved in the formation of various organs. Upon binding to R-spondins (RSPO1, RSPO2, RSPO3 or RSPO4), associates with phosphorylated LRP6 and frizzled receptors that are activated by extracellular Wnt receptors, triggering the canonical Wnt signaling pathway to increase expression of target genes. In contrast to classical G-protein coupled receptors, does not activate heterotrimeric G-proteins to transduce the signal. Its function as activator of the Wnt signaling pathway is required for the development of various organs, including liver, kidney, intestine, bone, reproductive tract and eye. May play a role in regulating the circadian rhythms of plasma lipids. Required for proper development of GnRH neurons (gonadotropin-releasing hormone expressing neurons) that control the release of reproductive hormones from the pituitary gland. This chain is Leucine-rich repeat-containing G-protein coupled receptor 4 (lgr4), found in Xenopus tropicalis (Western clawed frog).